Consider the following 84-residue polypeptide: Cell division topological specificity factor (84 aa).

It belongs to the MinE family.

In terms of biological role, prevents the cell division inhibition by proteins MinC and MinD at internal division sites while permitting inhibition at polar sites. This ensures cell division at the proper site by restricting the formation of a division septum at the midpoint of the long axis of the cell. The sequence is that of Cell division topological specificity factor from Hydrogenovibrio crunogenus (strain DSM 25203 / XCL-2) (Thiomicrospira crunogena).